The sequence spans 255 residues: Large ribosomal subunit protein uL2 (255 aa).

The interval 211-235 is disordered; sequence PHGGGNHQHVGHATTTKRDDPAGKK.

It belongs to the universal ribosomal protein uL2 family.

The protein is Large ribosomal subunit protein uL2 (rpl8) of Dictyostelium discoideum (Social amoeba).